The sequence spans 170 residues: MDDVNSIVLAAGQAAEEGGTNNFLVPNGTFFFVLAIFLVVLAVIGTFVVPPILKVLRERDAMVAKTLADNKKSAEQFAAAQADYEKAMAEARVQASSYRDNARAEGRKVVEDARAHAEQEVASTLQQANEQLKRERDAVELDLRANVGAMSATLANRIVGVDVTTPAAAG.

The helical transmembrane segment at 30 to 50 threads the bilayer; that stretch reads FFFVLAIFLVVLAVIGTFVVP.

Belongs to the ATPase B chain family. F-type ATPases have 2 components, F(1) - the catalytic core - and F(0) - the membrane proton channel. F(1) has five subunits: alpha(3), beta(3), gamma(1), delta(1), epsilon(1). F(0) has three main subunits: a(1), b(2) and c(10-14). The alpha and beta chains form an alternating ring which encloses part of the gamma chain. F(1) is attached to F(0) by a central stalk formed by the gamma and epsilon chains, while a peripheral stalk is formed by the delta and b chains.

It is found in the cell membrane. Its function is as follows. F(1)F(0) ATP synthase produces ATP from ADP in the presence of a proton or sodium gradient. F-type ATPases consist of two structural domains, F(1) containing the extramembraneous catalytic core and F(0) containing the membrane proton channel, linked together by a central stalk and a peripheral stalk. During catalysis, ATP synthesis in the catalytic domain of F(1) is coupled via a rotary mechanism of the central stalk subunits to proton translocation. Functionally, component of the F(0) channel, it forms part of the peripheral stalk, linking F(1) to F(0). The polypeptide is ATP synthase subunit b (Mycobacterium marinum (strain ATCC BAA-535 / M)).